A 600-amino-acid polypeptide reads, in one-letter code: DNA polymerase alpha subunit B (600 aa).

Positions 112 to 167 (AYTTPSKGPHKRVSSTPETPLTKRSISTRSPHQLLSPSSFSPSATPSQKYSSRTNR) are disordered. The segment covering 125–140 (SSTPETPLTKRSISTR) has biased composition (polar residues). Phosphoserine is present on Ser126. Thr127 and Thr130 each carry phosphothreonine. Ser141, Ser147, Ser152, and Ser154 each carry phosphoserine. A compositionally biased stretch (low complexity) spans 141 to 158 (SPHQLLSPSSFSPSATPS).

Belongs to the DNA polymerase alpha subunit B family. As to quaternary structure, component of the alpha DNA polymerase complex (also known as the alpha DNA polymerase-primase complex) consisting of four subunits: the catalytic subunit POLA1, the regulatory subunit POLA2, and the primase complex subunits PRIM1 and PRIM2 respectively. Within the complex, POLA1 directly interacts with PRIM2. Phosphorylated in a cell cycle-dependent manner, in G2/M phase.

It is found in the nucleus. Functionally, accessory subunit of the DNA polymerase alpha complex (also known as the alpha DNA polymerase-primase complex) which plays an essential role in the initiation of DNA synthesis. During the S phase of the cell cycle, the DNA polymerase alpha complex (composed of a catalytic subunit POLA1, an accessory subunit POLA2 and two primase subunits, the catalytic subunit PRIM1 and the regulatory subunit PRIM2) is recruited to DNA at the replicative forks via direct interactions with MCM10 and WDHD1. The primase subunit of the polymerase alpha complex initiates DNA synthesis by oligomerising short RNA primers on both leading and lagging strands. These primers are initially extended by the polymerase alpha catalytic subunit and subsequently transferred to polymerase delta and polymerase epsilon for processive synthesis on the lagging and leading strand, respectively. In Rattus norvegicus (Rat), this protein is DNA polymerase alpha subunit B (Pola2).